The primary structure comprises 349 residues: MPMPLDDSTLSLLPDHPLAAHNTFGIAATARFAARITHASQFEALHRDPRVAHLPQLVLGGGSNVVFTRDFDGVVLLDEIAGRRVVREDDDAWYVEAGGGENWHAFVAWTLEHGMAGLENLALIPGTVGAAPIQNIGAYGLEMKAYFDSLVAVELATGCSERFDAARCAFGYRDSFFKREGRGRFAIVSVTFRLPKQWVPRLGYADVTRELDARGIAPDAATARDVFDAVVAIRRAKLPDPLVLGNAGSFFKNPVIDAAQFDALRARAPEVVSYPQPDGQVKLAAGWLIDRCGWKGRALGAAAVHDRQALVLVNRGGATGADVLALARAIQADVQTQFGVELEAEPVCL.

Positions 24–197 (FGIAATARFA…VSVTFRLPKQ (174 aa)) constitute an FAD-binding PCMH-type domain. The active site involves arginine 173. The active-site Proton donor is the serine 249. Glutamate 345 is a catalytic residue.

Belongs to the MurB family. FAD serves as cofactor.

It is found in the cytoplasm. The catalysed reaction is UDP-N-acetyl-alpha-D-muramate + NADP(+) = UDP-N-acetyl-3-O-(1-carboxyvinyl)-alpha-D-glucosamine + NADPH + H(+). Its pathway is cell wall biogenesis; peptidoglycan biosynthesis. Functionally, cell wall formation. This is UDP-N-acetylenolpyruvoylglucosamine reductase from Burkholderia lata (strain ATCC 17760 / DSM 23089 / LMG 22485 / NCIMB 9086 / R18194 / 383).